The sequence spans 453 residues: MIDNDIANQVPKEFSVSEISNKIKELIENNFGHIKVKGEISGLKISSSGHAYFNLKENTAILACTCWRPILVKIKFPLNDGMEVVIGGKLSSYSGNSRYQLSVDNLQPAGLGAMIQILNERKIRLEKEGLFNKKRIPIPFLPDKIGVITSITGAVIKDIIHRIRERCPTRIIIWQVSVQGENSSHEMAEAIEGFNNLEEIHKPSVIIVARGGGSIEDLWSFNDEILVRAAYNSKIPIISAVGHEADYTLIDLAVDKRAPTPTAAAEFAVPVRSILNNTIQSYEKILLNNTNRLIKYHEQSIVNYDKIHRYFAYYINNRQQLLDETGFNLLDVLIRCIALKETKLKSFAKERINYAKIINYKILELTHQTAYLLKSVNNTLKNFEYKLELNSTLLASLDYHNVLKRGFAIVTGDAGNFLSSKSTATNEQSLNIKFFDGEINVVLSSHDLNARSS.

This sequence belongs to the XseA family. In terms of assembly, heterooligomer composed of large and small subunits.

It localises to the cytoplasm. The catalysed reaction is Exonucleolytic cleavage in either 5'- to 3'- or 3'- to 5'-direction to yield nucleoside 5'-phosphates.. Bidirectionally degrades single-stranded DNA into large acid-insoluble oligonucleotides, which are then degraded further into small acid-soluble oligonucleotides. The chain is Exodeoxyribonuclease 7 large subunit from Rickettsia typhi (strain ATCC VR-144 / Wilmington).